Consider the following 294-residue polypeptide: Flagellin B1 (294 aa).

Positions 1 to 8 (MKTRTRKG) are excised as a propeptide.

The protein belongs to the archaeal flagellin family.

The protein localises to the archaeal flagellum. Functionally, flagellin is the subunit protein which polymerizes to form the filaments of archaeal flagella. The sequence is that of Flagellin B1 (flaB1) from Thermococcus kodakarensis (strain ATCC BAA-918 / JCM 12380 / KOD1) (Pyrococcus kodakaraensis (strain KOD1)).